A 106-amino-acid polypeptide reads, in one-letter code: Ribonuclease P protein component 4 (106 aa).

Residues C57, C60, C83, and C86 each coordinate Zn(2+).

It belongs to the eukaryotic/archaeal RNase P protein component 4 family. In terms of assembly, consists of a catalytic RNA component and at least 4-5 protein subunits. Requires Zn(2+) as cofactor.

It is found in the cytoplasm. It catalyses the reaction Endonucleolytic cleavage of RNA, removing 5'-extranucleotides from tRNA precursor.. Its function is as follows. Part of ribonuclease P, a protein complex that generates mature tRNA molecules by cleaving their 5'-ends. This chain is Ribonuclease P protein component 4, found in Saccharolobus solfataricus (strain ATCC 35092 / DSM 1617 / JCM 11322 / P2) (Sulfolobus solfataricus).